We begin with the raw amino-acid sequence, 105 residues long: N(4)-acetylcytidine amidohydrolase (105 aa).

Residues 7–93 (TFFERFEHDI…VIAEIYPGLE (87 aa)) enclose the ASCH domain. The Proton acceptor role is filled by Lys-21. Residue Thr-24 is the Nucleophile of the active site. Glu-74 (proton donor) is an active-site residue.

The protein belongs to the N(4)-acetylcytidine amidohydrolase family.

The catalysed reaction is N(4)-acetylcytidine + H2O = cytidine + acetate + H(+). It carries out the reaction N(4)-acetyl-2'-deoxycytidine + H2O = 2'-deoxycytidine + acetate + H(+). It catalyses the reaction N(4)-acetylcytosine + H2O = cytosine + acetate + H(+). In terms of biological role, catalyzes the hydrolysis of N(4)-acetylcytidine (ac4C). The polypeptide is N(4)-acetylcytidine amidohydrolase (Shewanella baltica (strain OS155 / ATCC BAA-1091)).